We begin with the raw amino-acid sequence, 526 residues long: Na(+)/H(+) antiporter NhaB (526 aa).

11 helical membrane-spanning segments follow: residues 14–34 (FLGY…LVNP), 63–83 (CYPL…GMTS), 99–119 (MLLV…LFVF), 122–142 (LLLR…AAAF), 146–166 (FLDA…FYGI), 206–226 (LLMH…VGEP), 239–259 (FVSF…CGIL), 307–327 (AVIG…VGLI), 357–377 (FTAL…QQLF), 451–471 (ATPN…APLI), and 479–499 (VIMA…CVEF).

Belongs to the NhaB Na(+)/H(+) (TC 2.A.34) antiporter family.

It localises to the cell inner membrane. It carries out the reaction 2 Na(+)(in) + 3 H(+)(out) = 2 Na(+)(out) + 3 H(+)(in). In terms of biological role, na(+)/H(+) antiporter that extrudes sodium in exchange for external protons. This chain is Na(+)/H(+) antiporter NhaB, found in Pectobacterium carotovorum subsp. carotovorum (strain PC1).